Consider the following 489-residue polypeptide: Glutamyl-tRNA(Gln) amidotransferase subunit A (489 aa).

Catalysis depends on charge relay system residues Lys-80 and Ser-160. Catalysis depends on Ser-184, which acts as the Acyl-ester intermediate.

Belongs to the amidase family. GatA subfamily. As to quaternary structure, heterotrimer of A, B and C subunits.

The catalysed reaction is L-glutamyl-tRNA(Gln) + L-glutamine + ATP + H2O = L-glutaminyl-tRNA(Gln) + L-glutamate + ADP + phosphate + H(+). In terms of biological role, allows the formation of correctly charged Gln-tRNA(Gln) through the transamidation of misacylated Glu-tRNA(Gln) in organisms which lack glutaminyl-tRNA synthetase. The reaction takes place in the presence of glutamine and ATP through an activated gamma-phospho-Glu-tRNA(Gln). The chain is Glutamyl-tRNA(Gln) amidotransferase subunit A from Wolbachia pipientis wMel.